Here is a 24-residue protein sequence, read N- to C-terminus: Small ribosomal subunit protein uS5 (24 aa).

Belongs to the universal ribosomal protein uS5 family. In terms of assembly, part of the 30S ribosomal subunit. Contacts proteins S4 and S8.

Functionally, with S4 and S12 plays an important role in translational accuracy. In terms of biological role, located at the back of the 30S subunit body where it stabilizes the conformation of the head with respect to the body. The sequence is that of Small ribosomal subunit protein uS5 (rpsE) from Vibrio proteolyticus (Aeromonas proteolytica).